We begin with the raw amino-acid sequence, 325 residues long: MAVLKQPQHHHGKHGGRSFYQLIAYLMLTSRLDNYGMLFTSFGGAGIYKSQDYTSTTSQASILRLAGLCTAHCVLLGAAGNTWNDWMDRDIDSKVARTKDRPLASGKISSGEAFTWMAFLYSTSVGMLKAMLGDRNVWPFMVPLTAIILVYPLGKRPIARKLRIYPQYLLGIAVGYPTMYGWAAVYGPCMPISEILHRCVPLWIFLFFWSFYANTSYSYQDVEDDRKMKVNSAYNLAGKRIRALLAILASIALSTIPFVLRPFSSAWLWLSWVGAWVPGIIQQLLSFDPSKPESGGVLHLSTVKLGLWTVFACTLELYLSNRAVI.

5 consecutive transmembrane segments (helical) span residues 60–80 (ASIL…GAAG), 113–133 (AFTW…AMLG), 138–158 (WPFM…KRPI), 169–189 (LLGI…YGPC), and 192–212 (ISEI…WSFY). Residue N214 is glycosylated (N-linked (GlcNAc...) asparagine). 3 consecutive transmembrane segments (helical) span residues 243 to 263 (ALLA…LRPF), 267 to 287 (WLWL…LLSF), and 295 to 315 (GGVL…ACTL).

Belongs to the UbiA prenyltransferase family. It depends on Mg(2+) as a cofactor.

It is found in the membrane. The enzyme catalyses 6-hydroxymellein + (2E,6E)-farnesyl diphosphate = verruculide C + diphosphate. Its pathway is secondary metabolite biosynthesis; terpenoid biosynthesis. Its function is as follows. 6-hydroxymellein 5-farnesyltransferase; part of the gene cluster that mediates the biosynthesis of chrodrimanin B, a meroterpenoid that acts as a potent blocker of insect GABA-gated chloride channels. The first step of the pathway is the biosynthesis of 6-hydroxymellein by the polyketide synthase cdmE. The prenyltransferase cdmH acts as a 6-hydroxymellein 5-farnesyltransferase and produces the hydrophobic metabolite verruculide C. The FAD-dependent monooxygenase cdmI further converts verruculide C into verruculide B. The terpene cyclase cdmG then produced the pentacyclic molecule 3-hydroxypentacecilide A, the backbone structure of chrodrimanin B, via folding the farnesyl moiety of the substrate into the chair-boat conformation. The short-chain dehydrogenase/reductase cdmF functions as the 3-OH dehydrogenase that oxidizes the C-3 hydroxyl group of 3-hydroxypentacecilide A and produces chrodrimanin C, the dehydrogenated product of 3-hydroxypentacecilide A. The cytochrome P450 monooxygenase cdmJ then accepts both 3-hydroxypentacecilide A and chrodrimanin C and functions as a C-7-beta-hydroxylase to produce respectively chrodrimanin H and chrodrimanin F. The dioxygenase cdmA accepts chrodrimanin H to afford chrodrimanin E, which is further transformed to chrodrimanin A by the dioxygenase cdmD. CdmA can also accept chrodrimanin C as substrate to convert it into verruculide A, which is further converted into chrodrimanin T by cdmD. The last step of the biosynthesis is proposed to be performed by the acetyltransferase cdmC which acetylates chrodrimanin A to yield chrodrimanin B. The pathway may also lead to the production of additional shunt products, including chrodrimanins T and U. This chain is 6-hydroxymellein 5-farnesyltransferase cdmH, found in Talaromyces verruculosus (Penicillium verruculosum).